The sequence spans 419 residues: UDP-N-acetylglucosamine 1-carboxyvinyltransferase 2 (419 aa).

22-23 (KN) provides a ligand contact to phosphoenolpyruvate. Residue arginine 92 participates in UDP-N-acetyl-alpha-D-glucosamine binding. Aspartate 116 (proton donor) is an active-site residue. UDP-N-acetyl-alpha-D-glucosamine is bound by residues 121 to 125 (RPIDQ), aspartate 306, and leucine 328.

The protein belongs to the EPSP synthase family. MurA subfamily.

It is found in the cytoplasm. It catalyses the reaction phosphoenolpyruvate + UDP-N-acetyl-alpha-D-glucosamine = UDP-N-acetyl-3-O-(1-carboxyvinyl)-alpha-D-glucosamine + phosphate. The protein operates within cell wall biogenesis; peptidoglycan biosynthesis. In terms of biological role, cell wall formation. Adds enolpyruvyl to UDP-N-acetylglucosamine. The sequence is that of UDP-N-acetylglucosamine 1-carboxyvinyltransferase 2 from Latilactobacillus sakei subsp. sakei (strain 23K) (Lactobacillus sakei subsp. sakei).